A 221-amino-acid chain; its full sequence is MVHYVKMEDGKVMPIQEMLKSIERYNPEHLKVIEAYVEEQARENQYDLEANLACLKLYQFNPHLLNLDITYIILLKALTNFPHTDFVLCKCLLLPAQMNDETVKEIIYLADILEKCDFSLFWSRLAKHPENYQKISGFHDSIRKFVCHVVGITFQTIERGYLMQLLGNVEEKVLLSWLKRYGWKEEGGLVTIATQEDNIKTKHITEKIEFDNLAPLMANCL.

The PCI domain occupies 46 to 215 (YDLEANLACL…EKIEFDNLAP (170 aa)).

It belongs to the eIF-3 subunit K family. Component of the eukaryotic translation initiation factor 3 (eIF-3) complex.

It localises to the cytoplasm. In terms of biological role, component of the eukaryotic translation initiation factor 3 (eIF-3) complex, which is involved in protein synthesis of a specialized repertoire of mRNAs and, together with other initiation factors, stimulates binding of mRNA and methionyl-tRNAi to the 40S ribosome. The eIF-3 complex specifically targets and initiates translation of a subset of mRNAs involved in cell proliferation. The sequence is that of Eukaryotic translation initiation factor 3 subunit K from Anopheles gambiae (African malaria mosquito).